The sequence spans 233 residues: Auxin-responsive protein IAA11 (233 aa).

Disordered stretches follow at residues 1-27 (MAGL…RSSG) and 46-100 (PAAV…PKAQ). The EAR-like (transcriptional repression) signature appears at 11–15 (LRLGL). Positions 54 to 63 (GAQEDKEDAD) are enriched in acidic residues. The PB1 domain maps to 122–217 (AALVKVSMDG…SCKRLRIMKG (96 aa)).

It belongs to the Aux/IAA family. Homodimers and heterodimers. As to expression, highly expressed in etiolated shoots. Expressed in roots.

The protein localises to the nucleus. Functionally, aux/IAA proteins are short-lived transcriptional factors that function as repressors of early auxin response genes at low auxin concentrations. This is Auxin-responsive protein IAA11 (IAA11) from Oryza sativa subsp. japonica (Rice).